Consider the following 450-residue polypeptide: Phosphoglucosamine mutase 2 (450 aa).

Residue Ser-101 is the Phosphoserine intermediate of the active site. Mg(2+) is bound by residues Ser-101, Asp-245, Asp-247, and Asp-249. Ser-101 is subject to Phosphoserine.

It belongs to the phosphohexose mutase family. The cofactor is Mg(2+). In terms of processing, activated by phosphorylation.

The enzyme catalyses alpha-D-glucosamine 1-phosphate = D-glucosamine 6-phosphate. In terms of biological role, catalyzes the conversion of glucosamine-6-phosphate to glucosamine-1-phosphate. This Shewanella baltica (strain OS185) protein is Phosphoglucosamine mutase 2.